Here is a 597-residue protein sequence, read N- to C-terminus: Zinc finger CCCH domain-containing protein 29 (597 aa).

ANK repeat units follow at residues Glu76–Arg106 and Glu111–Cys143. 2 C3H1-type zinc fingers span residues Pro254–Phe281 and Gln289–Asp313. The span at Ala320–Glu337 shows a compositional bias: polar residues. Residues Ala320–Met341 form a disordered region.

As to expression, expressed in roots and anthers.

It localises to the nucleus. Its function is as follows. Involved in salt stress response. May positively modulate plant tolerance to salt stress. In Arabidopsis thaliana (Mouse-ear cress), this protein is Zinc finger CCCH domain-containing protein 29.